Here is a 684-residue protein sequence, read N- to C-terminus: MLSPIVPYSLLKMHWNPEHAQPLSQWPEQHLDVSSTTSSPAHKSELYSSRGRGSYSYAWANDDISALTASNLLKRYAEKYSGMLDSPYERPSVGAYPEPGAFGGLNGGQKSELEPWPLTHSTDGAYSLVPPSSHESLSGPKVVPTSAGPPGSGNVSAVNSNLSDSGYSGSSSCSGPHSSEYPPSYNGTYLSSGYCPQPSSALPPASLHALQPNPTLLPSYTTTAPVYNYPPSTYPHQTGLAPSYTHPTAPYIPSPLPSRPTVVGGSYGYQNSSVGGSEPGGSLKRKAFEMTLDEEDSDSSRYRKYSYDPMKTGGDSPYGVTDKAGNGFGTGSTDPQGFKPSKPSSQSSLEGDEVGKYSGLKPLVSPTYGAAGDYSPPAAMTGENGGAEQGFSQNRSQKRSDPMKSIEPRMLELVSRELQDCSPAMLWTELAGNCHIKAALEEDLLWPVLRPNPAIHPPKTILLFGPQGGGKTTLARSLSSQIGASFYRLSCATLASKLKGEAEQLLLTLFSVATARQPAMVLLSEVEAIEEEGLRQQLQAQLEKIQHNQSNQFLVVCTTRRPDLIKDSLLRCFSKRYHIGLPDGNTRRHVLLQALAPQGCSLSERELSAVLQRSEGFSVWELLQLCQQALASASASASVPLHSLPASLSSPTLQDFENAFCKVRPHSTPKELDTCMEWSKVYSH.

The segment covering Pro-27 to Ala-41 has biased composition (polar residues). Disordered regions lie at residues Pro-27–Ser-48, Pro-99–Ser-179, and Leu-292–Met-403. Positions Ser-160 to Ser-179 are enriched in low complexity. Residue Ala-431 participates in ATP binding.

This sequence belongs to the AAA ATPase family. Mg(2+) is required as a cofactor. Highly expressed in vascular endothelial cells and neuronal cells.

It is found in the cytoplasm. It localises to the cell cortex. The enzyme catalyses ATP + H2O = ADP + phosphate + H(+). Its function is as follows. Microtubule-severing enzyme that negatively regulates cell migration and wound healing. In migrating cells, targets dynamic microtubules (MTs) at the leading edge and severs them, thereby suppressing motility. Negative regulator of axon regeneration that suppresses axonal growth by selectively severing dynamic MTs in the distal axon shaft and growth cone. Contributes to proper cell branching during endothelial and neuronal development. The protein is Fidgetin-like protein 2 (fignl2) of Danio rerio (Zebrafish).